A 120-amino-acid chain; its full sequence is Large ribosomal subunit protein bL19 (120 aa).

Belongs to the bacterial ribosomal protein bL19 family.

Functionally, this protein is located at the 30S-50S ribosomal subunit interface and may play a role in the structure and function of the aminoacyl-tRNA binding site. In Thermosynechococcus vestitus (strain NIES-2133 / IAM M-273 / BP-1), this protein is Large ribosomal subunit protein bL19.